We begin with the raw amino-acid sequence, 168 residues long: MRWSGRAHVFGDDVDTDQIIPGRCLRRVSYDELGRYAMTGADPEFPEKVREGDVIVAGKNFGCGSSREQAVMALQQAGVACVVARSFARIFYRNAINRGLPTVEAEEDPTEVVEDGNRVTVDLDELVLRAGSEEVPLREPPEFALQAWREGGLLELVKKNPDKPPWRD.

Belongs to the LeuD family. LeuD type 2 subfamily. As to quaternary structure, heterodimer of LeuC and LeuD.

It carries out the reaction (2R,3S)-3-isopropylmalate = (2S)-2-isopropylmalate. The protein operates within amino-acid biosynthesis; L-leucine biosynthesis; L-leucine from 3-methyl-2-oxobutanoate: step 2/4. Its function is as follows. Catalyzes the isomerization between 2-isopropylmalate and 3-isopropylmalate, via the formation of 2-isopropylmaleate. This is 3-isopropylmalate dehydratase small subunit 2 (leuD2) from Methanopyrus kandleri (strain AV19 / DSM 6324 / JCM 9639 / NBRC 100938).